The sequence spans 311 residues: tRNA dimethylallyltransferase (311 aa).

10–17 (GPTASGKT) is an ATP binding site. 12–17 (TASGKT) contacts substrate. 3 interaction with substrate tRNA regions span residues 35 to 38 (DSAL), 159 to 163 (QRINR), and 240 to 245 (RCVGYR).

This sequence belongs to the IPP transferase family. As to quaternary structure, monomer. It depends on Mg(2+) as a cofactor.

The catalysed reaction is adenosine(37) in tRNA + dimethylallyl diphosphate = N(6)-dimethylallyladenosine(37) in tRNA + diphosphate. In terms of biological role, catalyzes the transfer of a dimethylallyl group onto the adenine at position 37 in tRNAs that read codons beginning with uridine, leading to the formation of N6-(dimethylallyl)adenosine (i(6)A). The polypeptide is tRNA dimethylallyltransferase (Haemophilus influenzae (strain PittEE)).